Reading from the N-terminus, the 460-residue chain is Bifunctional protein GlmU (460 aa).

Residues 1-233 are pyrophosphorylase; it reads MLDIVIMAAG…ETEVLGVNSP (233 aa). UDP-N-acetyl-alpha-D-glucosamine-binding positions include K21, Q76, and 81–82; that span reads GT. A Mg(2+)-binding site is contributed by D105. Residues G140, E158, and N231 each coordinate UDP-N-acetyl-alpha-D-glucosamine. N231 contacts Mg(2+). Residues 234–254 are linker; the sequence is LQLADLERRLQRKQAEALLEA. Positions 255–460 are N-acetyltransferase; the sequence is GVRLADPARF…AGWQRPQKKR (206 aa). Positions 337 and 355 each coordinate UDP-N-acetyl-alpha-D-glucosamine. H367 acts as the Proton acceptor in catalysis. UDP-N-acetyl-alpha-D-glucosamine-binding residues include Y370 and N381. Residues A384, 390 to 391, S409, G427, and R444 each bind acetyl-CoA; that span reads NY.

The protein in the N-terminal section; belongs to the N-acetylglucosamine-1-phosphate uridyltransferase family. It in the C-terminal section; belongs to the transferase hexapeptide repeat family. As to quaternary structure, homotrimer. Mg(2+) is required as a cofactor.

It localises to the cytoplasm. It carries out the reaction alpha-D-glucosamine 1-phosphate + acetyl-CoA = N-acetyl-alpha-D-glucosamine 1-phosphate + CoA + H(+). The catalysed reaction is N-acetyl-alpha-D-glucosamine 1-phosphate + UTP + H(+) = UDP-N-acetyl-alpha-D-glucosamine + diphosphate. It functions in the pathway nucleotide-sugar biosynthesis; UDP-N-acetyl-alpha-D-glucosamine biosynthesis; N-acetyl-alpha-D-glucosamine 1-phosphate from alpha-D-glucosamine 6-phosphate (route II): step 2/2. The protein operates within nucleotide-sugar biosynthesis; UDP-N-acetyl-alpha-D-glucosamine biosynthesis; UDP-N-acetyl-alpha-D-glucosamine from N-acetyl-alpha-D-glucosamine 1-phosphate: step 1/1. It participates in bacterial outer membrane biogenesis; LPS lipid A biosynthesis. Functionally, catalyzes the last two sequential reactions in the de novo biosynthetic pathway for UDP-N-acetylglucosamine (UDP-GlcNAc). The C-terminal domain catalyzes the transfer of acetyl group from acetyl coenzyme A to glucosamine-1-phosphate (GlcN-1-P) to produce N-acetylglucosamine-1-phosphate (GlcNAc-1-P), which is converted into UDP-GlcNAc by the transfer of uridine 5-monophosphate (from uridine 5-triphosphate), a reaction catalyzed by the N-terminal domain. The polypeptide is Bifunctional protein GlmU (Methylibium petroleiphilum (strain ATCC BAA-1232 / LMG 22953 / PM1)).